We begin with the raw amino-acid sequence, 394 residues long: Cell division protein FtsZ (394 aa).

Residues 21 to 25 (GGGGN), 108 to 110 (GTG), Glu139, Arg143, and Asp187 each bind GTP.

This sequence belongs to the FtsZ family. Homodimer. Polymerizes to form a dynamic ring structure in a strictly GTP-dependent manner. Interacts directly with several other division proteins.

The protein resides in the cytoplasm. In terms of biological role, essential cell division protein that forms a contractile ring structure (Z ring) at the future cell division site. The regulation of the ring assembly controls the timing and the location of cell division. One of the functions of the FtsZ ring is to recruit other cell division proteins to the septum to produce a new cell wall between the dividing cells. Binds GTP and shows GTPase activity. The polypeptide is Cell division protein FtsZ (Azotobacter vinelandii).